A 1095-amino-acid chain; its full sequence is MLHYLLSVLLLIFENILELCMCITLVILIYYFWPSKQLEDATLQYFPDTTQNSSEVFIDPPERNPIFYPISPLRHKKRSSKEEMTPDKKRDSSEKISKQPPRELFEPNEQEQVPSHIKPEIFFVLKALEGLELPTTWQLDPKDVETLSIDTGSVVLSPGRANDVIVVVISGELGIFTNVSLGDKRYDCNIKTLRSGESYFSQTSIIEILMNEKPNNKYIHLKALTSCRVATYHLTSFHTSFIANPQQWIRTIQVVMTRLQQCTLITCNMYLGIGGKCLNAKRKLPDSGKFKDFNKLTEAEQLNKGVEAIAQAMGIPDQSDKLREKVRKYECQAGTVVTEENSFEIDMIFVVFGKLRLKRGDLEHDDTGTSLTFDVYPGDMLPSMQILTNEPAMCSAKALEKTIYFKICRDEYIQFLFAHPVIYLRLAFHALQFISPFARVFDMAVHWHRIETGQALFRQGDKSDSMHIVMGGRLRAVDSTKIIEEYGRLDLIGITDMAEKRPRRNTVMAVRFSHIVCIPENLLSFVKIRYPQVGNKLLKLISKCWKAPTPETMSHVETTRNQNLRTIAIVPASRRVPLTEFTCELYNQLSKHVKTLRLSSSVVENYFESEVITKKADYGLMHWLNVQEIAYSLVLYQCDFHKTNWTRRCLRMADAILMVALGTESKEEQVLAEALLSCNEKGVRQSKELVFLWPIDTPTPSGTAAWIKESYYSGYHHLRAPNRLFSFPLKTREKKIVEYYETTVYGEISYQSDFSRLARILTGNAIGIVFGGGGARGAAHAGALRALIEKKVQIDMVGGTSIGALFGSLYATTPDIRAVGRMKDFFTDRLRNNILDVVRDLTWPYCGILTGHRFNLCVQRMLNDVNIEDCWVSFFCITTDLTSSSMRIHRNGIMWPVVRSSMSIAGYVPPICDPQDGHLLLDGAYVNNLPADIMRSLGANVVIAIDVGMSDDNTNLRNYGFSISGTWCLFKRWWPFGEELRVLNMNEVQNRLAYVCCVNQMEIVKNAQYCYYVKLPIESFGIFDFSKFDQAAQIGYDITKQKMEEFFEDSVATRRKLLGCARNVRQTPQKSKNDNILSFVNMPVLPKPPSDIKSD.

Residues 9-29 traverse the membrane as a helical segment; it reads LLLIFENILELCMCITLVILI. The tract at residues 75–113 is disordered; that stretch reads HKKRSSKEEMTPDKKRDSSEKISKQPPRELFEPNEQEQV. Basic and acidic residues predominate over residues 80–105; that stretch reads SKEEMTPDKKRDSSEKISKQPPRELF. A nucleoside 3',5'-cyclic phosphate contacts are provided by residues 144-237, 327-416, and 450-509; these read VETL…LTSF, RKYE…IQFL, and IETG…TVMA. A PNPLA domain is found at 768–935; the sequence is IVFGGGGARG…VNNLPADIMR (168 aa). Positions 772 to 777 match the GXGXXG motif; the sequence is GGGARG. The short motif at 799–803 is the GXSXG element; it reads GTSIG. Ser801 functions as the Nucleophile in the catalytic mechanism. Asp922 serves as the catalytic Proton acceptor. A DGA/G motif is present at residues 922 to 924; sequence DGA.

Belongs to the NTE family.

It localises to the membrane. The protein is Putative patatin-like phospholipase domain-containing protein M110.7 of Caenorhabditis elegans.